We begin with the raw amino-acid sequence, 213 residues long: Protein GrpE (213 aa).

The disordered stretch occupies residues 1 to 61; sequence MEQGEKQVME…AEKAPTAEEL (61 aa). The segment covering 13–35 has biased composition (acidic residues); the sequence is TYDEPEREQPIEEEAAPQPEEES.

Belongs to the GrpE family. Homodimer.

It is found in the cytoplasm. Its function is as follows. Participates actively in the response to hyperosmotic and heat shock by preventing the aggregation of stress-denatured proteins, in association with DnaK and GrpE. It is the nucleotide exchange factor for DnaK and may function as a thermosensor. Unfolded proteins bind initially to DnaJ; upon interaction with the DnaJ-bound protein, DnaK hydrolyzes its bound ATP, resulting in the formation of a stable complex. GrpE releases ADP from DnaK; ATP binding to DnaK triggers the release of the substrate protein, thus completing the reaction cycle. Several rounds of ATP-dependent interactions between DnaJ, DnaK and GrpE are required for fully efficient folding. This is Protein GrpE from Geobacillus kaustophilus (strain HTA426).